A 327-amino-acid polypeptide reads, in one-letter code: Lipoyl synthase (327 aa).

[4Fe-4S] cluster-binding residues include C66, C71, C77, C92, C96, C99, and S306. The Radical SAM core domain maps to 78 to 295 (FSKGTATFMI…EKEAYELGFT (218 aa)).

Belongs to the radical SAM superfamily. Lipoyl synthase family. The cofactor is [4Fe-4S] cluster.

It is found in the cytoplasm. It catalyses the reaction [[Fe-S] cluster scaffold protein carrying a second [4Fe-4S](2+) cluster] + N(6)-octanoyl-L-lysyl-[protein] + 2 oxidized [2Fe-2S]-[ferredoxin] + 2 S-adenosyl-L-methionine + 4 H(+) = [[Fe-S] cluster scaffold protein] + N(6)-[(R)-dihydrolipoyl]-L-lysyl-[protein] + 4 Fe(3+) + 2 hydrogen sulfide + 2 5'-deoxyadenosine + 2 L-methionine + 2 reduced [2Fe-2S]-[ferredoxin]. The protein operates within protein modification; protein lipoylation via endogenous pathway; protein N(6)-(lipoyl)lysine from octanoyl-[acyl-carrier-protein]: step 2/2. In terms of biological role, catalyzes the radical-mediated insertion of two sulfur atoms into the C-6 and C-8 positions of the octanoyl moiety bound to the lipoyl domains of lipoate-dependent enzymes, thereby converting the octanoylated domains into lipoylated derivatives. The chain is Lipoyl synthase from Neisseria gonorrhoeae (strain ATCC 700825 / FA 1090).